We begin with the raw amino-acid sequence, 646 residues long: Wee1-like protein kinase (646 aa).

A disordered region spans residues Met1 to Lys181. Over residues Asp32–Glu43 the composition is skewed to acidic residues. Ser53 carries the phosphoserine; by PLK1 modification. Residues Ser78 and Ser85 each carry the phosphoserine modification. Residues Leu94–Asp103 show a composition bias toward low complexity. Residue Ser123 is modified to Phosphoserine; by CDK1. Phosphoserine is present on residues Ser127, Ser137, Ser139, Ser150, and Ser165. Basic and acidic residues predominate over residues Arg158–His170. Residues Thr187, Thr190, and Thr239 each carry the phosphothreonine modification. Residues Ser270, Ser307, and Ser312 each carry the phosphoserine modification. The Protein kinase domain maps to Phe299–Leu569. ATP-binding positions include Ile305–Val313 and Lys328. A Mg(2+)-binding site is contributed by Asn342. The active-site Proton acceptor is Asp426. Mg(2+) is bound by residues Asn431, Asp463, and Gly465. Ser642 bears the Phosphoserine; by BRSK1 and BRSK2 mark.

The protein belongs to the protein kinase superfamily. Ser/Thr protein kinase family. WEE1 subfamily. The cofactor is Mg(2+). Phosphorylated during M and G1 phases. Also autophosphorylated. Phosphorylation at Ser-642 by BRSK1 and BRSK2 in post-mitotic neurons, leads to down-regulate WEE1 activity in polarized neurons. Phosphorylated at Ser-53 and Ser-123 by PLK1 and CDK1, respectively, generating an signal for degradation that can be recognized by the SCF(BTRC) complex, leading to its ubiquitination and degradation at the onset of G2/M phase. Post-translationally, dephosphorylated at Thr-239 by CTDP1. Dephosphorylated at Ser-53 and Ser-123 by the serine/threonine-protein phosphatase 2A preventing its ubiquitin-mediated degradation. In terms of processing, ubiquitinated and degraded at the onset of G2/M phase.

The protein localises to the nucleus. It catalyses the reaction L-tyrosyl-[protein] + ATP = O-phospho-L-tyrosyl-[protein] + ADP + H(+). With respect to regulation, synthesis is increased during S and G2 phases, presumably by an increase in transcription; activity is decreased by phosphorylation during M phase. Protein levels fall in M phase as a result of decreased synthesis combined with degradation. Activity seems to be negatively regulated by phosphorylation upon entry into mitosis, although N-terminal phosphorylation might also regulate the protein stability via protection from proteolysis or might regulate the subcellular location. Functionally, acts as a negative regulator of entry into mitosis (G2 to M transition) by protecting the nucleus from cytoplasmically activated cyclin B1-complexed CDK1 before the onset of mitosis by mediating phosphorylation of CDK1 on 'Tyr-15'. Specifically phosphorylates and inactivates cyclin B1-complexed CDK1 reaching a maximum during G2 phase and a minimum as cells enter M phase. Phosphorylation of cyclin B1-CDK1 occurs exclusively on 'Tyr-15' and phosphorylation of monomeric CDK1 does not occur. Its activity increases during S and G2 phases and decreases at M phase when it is hyperphosphorylated. A correlated decrease in protein level occurs at M/G1 phase, probably due to its degradation. In Homo sapiens (Human), this protein is Wee1-like protein kinase.